The sequence spans 405 residues: Bestrophin homolog 14 (405 aa).

A run of 4 helical transmembrane segments spans residues 28–48 (LIGFYIAYYIVLAFQWYLLDE), 63–83 (IGAQYIPLSFLLGFFVSLIVA), 223–243 (LVYTQVVAIATYGYFFICLIG), and 256–276 (EITILFPIFTTFQMLFYLGWL).

This sequence belongs to the anion channel-forming bestrophin (TC 1.A.46) family. Calcium-sensitive chloride channel subfamily.

It is found in the membrane. This is Bestrophin homolog 14 (best-14) from Caenorhabditis elegans.